The chain runs to 534 residues: EH domain-containing protein 1 (534 aa).

An N-acetylmethionine modification is found at M1. The region spanning 55–286 (FDNKPMVLLV…DLFKDIQSLP (232 aa)) is the Dynamin-type G domain. Positions 65–72 (GQYSTGKT) are G1 motif. An ATP-binding site is contributed by 65–72 (GQYSTGKT). The tract at residues 91-92 (EP) is G2 motif. A G3 motif region spans residues 153–156 (DTPG). Residues 198–227 (DEFSEVIKALKNHEDKIRVVLNKADQIETQ) adopt a coiled-coil conformation. The segment at 219–222 (NKAD) is G4 motif. K220 contacts ATP. A region of interest (G5 motif) is located at residue I243. Residue W258 coordinates ATP. Phosphoserine occurs at positions 355 and 456. Residues 444-532 (DKPTYDEIFY…PHLVPPSKRR (89 aa)) form the EH domain. Positions 476-511 (LPNTVLGKIWKLADVDKDGLLDDEEFALANHLIKVK) constitute an EF-hand domain. Ca(2+) is bound by residues D489, D491, D493, and E500.

The protein belongs to the TRAFAC class dynamin-like GTPase superfamily. Dynamin/Fzo/YdjA family. EHD subfamily. In terms of assembly, homooligomer, and heterooligomer with EHD2, EHD3 and EHD4, ATP-binding is required for heterooligomerization. Interacts (via EH domain) with MICALL1 (via NPF1 motif); the interaction is direct and recruits EHD1 to membranes. Interacts with RAB35; the interaction is indirect through MICALL1 and recruits EHD1 to membranes. Interacts (via EH domain) with PACSIN2 (via NPF motifs); regulates localization to tubular recycling endosome membranes. Interacts with PACSIN1. Interacts with RAB8A. Interacts with FER1L5 (via second C2 domain). Interacts with MYOF. Interacts with ZFYVE20. Interacts (via EH domain) with RAB11FIP2.

It localises to the recycling endosome membrane. It is found in the early endosome membrane. The protein resides in the cell membrane. The protein localises to the cell projection. Its subcellular location is the cilium membrane. In terms of biological role, ATP- and membrane-binding protein that controls membrane reorganization/tubulation upon ATP hydrolysis. Acts in early endocytic membrane fusion and membrane trafficking of recycling endosomes. Recruited to endosomal membranes upon nerve growth factor stimulation, indirectly regulates neurite outgrowth. Plays a role in myoblast fusion. Involved in the unidirectional retrograde dendritic transport of endocytosed BACE1 and in efficient sorting of BACE1 to axons implicating a function in neuronal APP processing. Plays a role in the formation of the ciliary vesicle (CV), an early step in cilium biogenesis. Proposed to be required for the fusion of distal appendage vesicles (DAVs) to form the CV by recruiting SNARE complex component SNAP29. Is required for recruitment of transition zone proteins CEP290, RPGRIP1L, TMEM67 and B9D2, and of IFT20 following DAV reorganization before Rab8-dependent ciliary membrane extension. Required for the loss of CCP110 form the mother centriole essential for the maturation of the basal body during ciliogenesis. The polypeptide is EH domain-containing protein 1 (Pongo abelii (Sumatran orangutan)).